Consider the following 466-residue polypeptide: MVSSRASRRKRASATDIYKTCKQSGTCPPDVVNKVEGTTLADRFLQWASLGIFLGGLGIGTGTGTGGRTGYIPLGGRPSTVVDVTPARPPVVIEPVGPTEPSIVQLVEESSVVSSGTPIPTFTGTSGFEITSSATTTPAVLDITPASGSVQISTTSYTNPAFADPSLIEVPQTGEVSGNIFVTTPTSGTHGYEEIPMQVFASHGTGTEPISSTPVPGVSRVAGPRLYSRAYHQVRVNNFDFVTRPSSFVTFDNPAFEPGDTSLTFEPADTAPDPDFLDIVRLHRPALTSRRGTVRFSRLGKKATMFTRRGTQIGAQVHYYHDISNITATEDIEMQPLLTSESTDGLYDIYADADIDNAMLHTTSHTGSTGPRSHLSFPSIPSTVSTKYSNTTIPFTTSWDIPVTTGPDIVLPTASPNLPFVPPTSIDTTVAIAIQGSNYYLLPLLYYFLKKRKRIPYFFTDGFVAV.

Residues 1–12 (MVSSRASRRKRA) carry the Nuclear localization signal motif. A disulfide bond links cysteine 21 and cysteine 27. The Nuclear localization signal motif lies at 447–455 (YFLKKRKRI).

This sequence belongs to the papillomaviridae L2 protein family. In terms of assembly, interacts with major capsid protein L1. Interacts with E2; this interaction inhibits E2 transcriptional activity but not the DNA replication function E2. Interacts with host GADD45GIP1. Interacts with host HSPA8; this interaction is required for L2 nuclear translocation. Interacts with host importins KPNB2 and KPNB3. Forms a complex with importin alpha2-beta1 heterodimers via interaction with the importin alpha2 adapter. Interacts with host DYNLT1; this interaction is essential for virus intracellular transport during entry. Interacts (via C-terminus) with host retromer subunits VPS35 and VPS29. In terms of processing, highly phosphorylated.

Its subcellular location is the virion. The protein localises to the host nucleus. It localises to the host early endosome. It is found in the host Golgi apparatus. Minor protein of the capsid that localizes along the inner surface of the virion, within the central cavities beneath the L1 pentamers. Plays a role in capsid stabilization through interaction with the major capsid protein L1. Once the virion enters the host cell, L2 escorts the genomic DNA into the nucleus by promoting escape from the endosomal compartments and traffic through the host Golgi network. Mechanistically, the C-terminus of L2 possesses a cell-penetrating peptide that protudes from the host endosome, interacts with host cytoplasmic retromer cargo and thereby mediates the capsid delivery to the host trans-Golgi network. Plays a role through its interaction with host dynein in the intracellular microtubule-dependent transport of viral capsid toward the nucleus. Mediates the viral genome import into the nucleus through binding to host importins. Once within the nucleus, L2 localizes viral genomes to host PML bodies in order to activate early gene expression for establishment of infection. Later on, promotes late gene expression by interacting with the viral E2 protein and by inhibiting its transcriptional activation functions. During virion assembly, encapsidates the genome by direct interaction with the viral DNA. The sequence is that of Minor capsid protein L2 from Homo sapiens (Human).